Consider the following 506-residue polypeptide: Galactose/methyl galactoside import ATP-binding protein MglA (506 aa).

ABC transporter domains follow at residues L14 to S249 and V264 to L506. G46–S53 contributes to the ATP binding site.

The protein belongs to the ABC transporter superfamily. Galactose/methyl galactoside importer (TC 3.A.1.2.3) family. The complex is composed of one ATP-binding protein (MglA), two transmembrane proteins (MglC) and a solute-binding protein (MglB).

It localises to the cell inner membrane. The catalysed reaction is D-galactose(out) + ATP + H2O = D-galactose(in) + ADP + phosphate + H(+). It carries out the reaction methyl beta-D-galactoside(out) + ATP + H2O = methyl beta-D-galactoside(in) + ADP + phosphate + H(+). Functionally, part of the ABC transporter complex MglABC involved in galactose/methyl galactoside import. Responsible for energy coupling to the transport system. The polypeptide is Galactose/methyl galactoside import ATP-binding protein MglA (Escherichia coli O6:K15:H31 (strain 536 / UPEC)).